A 455-amino-acid chain; its full sequence is ATP-dependent protease ATPase subunit HslU (455 aa).

ATP is bound by residues valine 23, 65–70 (GVGKTE), aspartate 266, glutamate 333, and arginine 405.

This sequence belongs to the ClpX chaperone family. HslU subfamily. A double ring-shaped homohexamer of HslV is capped on each side by a ring-shaped HslU homohexamer. The assembly of the HslU/HslV complex is dependent on binding of ATP.

The protein resides in the cytoplasm. ATPase subunit of a proteasome-like degradation complex; this subunit has chaperone activity. The binding of ATP and its subsequent hydrolysis by HslU are essential for unfolding of protein substrates subsequently hydrolyzed by HslV. HslU recognizes the N-terminal part of its protein substrates and unfolds these before they are guided to HslV for hydrolysis. This Xanthomonas axonopodis pv. citri (strain 306) protein is ATP-dependent protease ATPase subunit HslU.